A 30-amino-acid polypeptide reads, in one-letter code: Cyclotide hyen-D (30 aa).

Positions 1 to 30 (GFPCGESCVYIPCFTAAIGCSCKSKVCYKN) form a cross-link, cyclopeptide (Gly-Asn). 3 disulfides stabilise this stretch: Cys4–Cys20, Cys8–Cys22, and Cys13–Cys27.

This is a cyclic peptide. As to expression, detected in stems (at protein level).

In terms of biological role, probably participates in a plant defense mechanism. Has strong cytotoxic activity against HUVEC cells (LC(50)= 0.58 uM) and various cancer cells including HeLa (LC(50)= 0.48 uM), MCF-7 and K562. Also displays some hemolytic activity. Binds to and induces leakage in phospholipd membranes, particularly ones containing 1-palmitoyl-2-oleophosphatidylethanolamine (POPE). This Pigea enneasperma (Spade flower) protein is Cyclotide hyen-D.